Here is a 151-residue protein sequence, read N- to C-terminus: uncharacterized protein (151 aa).

4 residues coordinate [4Fe-4S] cluster: Cys-24, Cys-27, Cys-92, and Cys-129.

This sequence belongs to the complex I 20 kDa subunit family. [4Fe-4S] cluster serves as cofactor.

This is an uncharacterized protein from Methanocaldococcus jannaschii (strain ATCC 43067 / DSM 2661 / JAL-1 / JCM 10045 / NBRC 100440) (Methanococcus jannaschii).